The following is a 135-amino-acid chain: uncharacterized protein (135 aa).

Residues 1–80 form a disordered region; it reads MRSSSLPGAR…QRGSCASANA (80 aa). Gly residues predominate over residues 54-65; it reads GARGGGRRGWGG.

This is an uncharacterized protein from Homo sapiens (Human).